The primary structure comprises 143 residues: Putative pre-16S rRNA nuclease (143 aa).

Belongs to the YqgF nuclease family.

It is found in the cytoplasm. In terms of biological role, could be a nuclease involved in processing of the 5'-end of pre-16S rRNA. This Lactobacillus gasseri (strain ATCC 33323 / DSM 20243 / BCRC 14619 / CIP 102991 / JCM 1131 / KCTC 3163 / NCIMB 11718 / NCTC 13722 / AM63) protein is Putative pre-16S rRNA nuclease.